A 180-amino-acid chain; its full sequence is Probable cobalt-precorrin-6B C(15)-methyltransferase (decarboxylating) (180 aa).

S-adenosyl-L-methionine is bound by residues T16, 40–44, D61, and A89; that span reads GCGSG.

Belongs to the methyltransferase superfamily. Archaeal-type CbiT family.

The enzyme catalyses Co-precorrin-6B + S-adenosyl-L-methionine = Co-precorrin-7 + S-adenosyl-L-homocysteine + CO2. Its pathway is cofactor biosynthesis; adenosylcobalamin biosynthesis; cob(II)yrinate a,c-diamide from sirohydrochlorin (anaerobic route): step 8/10. Catalyzes the methylation of C-15 in cobalt-precorrin-6B followed by the decarboxylation of C-12 to form cobalt-precorrin-7. The chain is Probable cobalt-precorrin-6B C(15)-methyltransferase (decarboxylating) from Methanococcus vannielii (strain ATCC 35089 / DSM 1224 / JCM 13029 / OCM 148 / SB).